Here is a 311-residue protein sequence, read N- to C-terminus: Malate dehydrogenase (311 aa).

Residues 7 to 13 (GAAGGIG) and aspartate 34 contribute to the NAD(+) site. Residues arginine 81 and arginine 87 each coordinate substrate. NAD(+) is bound by residues asparagine 94 and 117–119 (ITN). Substrate is bound by residues asparagine 119 and arginine 153. The Proton acceptor role is filled by histidine 177. NAD(+) is bound at residue methionine 227.

Belongs to the LDH/MDH superfamily. MDH type 1 family. In terms of assembly, homodimer.

The enzyme catalyses (S)-malate + NAD(+) = oxaloacetate + NADH + H(+). In terms of biological role, catalyzes the reversible oxidation of malate to oxaloacetate. The sequence is that of Malate dehydrogenase from Aeromonas hydrophila subsp. hydrophila (strain ATCC 7966 / DSM 30187 / BCRC 13018 / CCUG 14551 / JCM 1027 / KCTC 2358 / NCIMB 9240 / NCTC 8049).